The sequence spans 429 residues: Glucose-1-phosphate adenylyltransferase (429 aa).

Residues Gly162, 177–178 (EK), and Ser209 each bind alpha-D-glucose 1-phosphate.

Belongs to the bacterial/plant glucose-1-phosphate adenylyltransferase family. In terms of assembly, homotetramer.

The catalysed reaction is alpha-D-glucose 1-phosphate + ATP + H(+) = ADP-alpha-D-glucose + diphosphate. Its pathway is glycan biosynthesis; glycogen biosynthesis. In terms of biological role, involved in the biosynthesis of ADP-glucose, a building block required for the elongation reactions to produce glycogen. Catalyzes the reaction between ATP and alpha-D-glucose 1-phosphate (G1P) to produce pyrophosphate and ADP-Glc. The polypeptide is Glucose-1-phosphate adenylyltransferase (Nostoc punctiforme (strain ATCC 29133 / PCC 73102)).